The following is a 294-amino-acid chain: Tetraspanin-15 (294 aa).

Residues 1-23 (MPRGDSEQVRYCARFSYLWLKFS) are Cytoplasmic-facing. A helical membrane pass occupies residues 24–44 (LVIYSTVFWLIGGLVLSVGIY). Topologically, residues 45 to 62 (AEVERQKYKTLESAFLAP) are extracellular. A helical membrane pass occupies residues 63–83 (AIILILLGVVMFIVSFIGVLA). At 84-93 (SLRDNLCLLQ) the chain is on the cytoplasmic side. The helical transmembrane segment at 94–114 (AFMYILGICLIIELIGGVVAL) threads the bilayer. Topologically, residues 115 to 235 (IFRNQTIDFL…WFTDNYTIMA (121 aa)) are extracellular. Asparagine 118 carries an N-linked (GlcNAc...) asparagine glycan. 4 disulfides stabilise this stretch: cysteine 154–cysteine 219, cysteine 155–cysteine 185, cysteine 171–cysteine 179, and cysteine 186–cysteine 198. Asparagine 189 and asparagine 230 each carry an N-linked (GlcNAc...) asparagine glycan. A helical membrane pass occupies residues 236-256 (GVLLGILLPQFLGVLLTFLYI). The Cytoplasmic segment spans residues 257-294 (TRVEDIITEHSVTDGLLGPGTKAGVEAAGTGCCMCYPI).

It belongs to the tetraspanin (TM4SF) family. In terms of assembly, interacts with ADAM10; the interaction influences ADAM10 substrate specificity, endocytosis and turnover. Palmitoylated.

It localises to the cell membrane. Its subcellular location is the late endosome membrane. Functionally, part of TspanC8 subgroup, composed of 6 members that interact with the transmembrane metalloprotease ADAM10. This interaction is required for ADAM10 exit from the endoplasmic reticulum and for enzymatic maturation and trafficking to the cell surface as well as substrate specificity. Different TspanC8/ADAM10 complexes have distinct substrates. Promotes ADAM10-mediated cleavage of CDH2. Negatively regulates ligand-induced Notch activity probably by regulating ADAM10 activity. This Bos taurus (Bovine) protein is Tetraspanin-15 (TSPAN15).